Here is a 126-residue protein sequence, read N- to C-terminus: Aspartate 1-decarboxylase (126 aa).

Ser25 (schiff-base intermediate with substrate; via pyruvic acid) is an active-site residue. Ser25 carries the post-translational modification Pyruvic acid (Ser). Substrate is bound at residue Thr57. The Proton donor role is filled by Tyr58. 73-75 (GAA) is a binding site for substrate.

Belongs to the PanD family. As to quaternary structure, heterooctamer of four alpha and four beta subunits. The cofactor is pyruvate. Is synthesized initially as an inactive proenzyme, which is activated by self-cleavage at a specific serine bond to produce a beta-subunit with a hydroxyl group at its C-terminus and an alpha-subunit with a pyruvoyl group at its N-terminus.

It localises to the cytoplasm. It carries out the reaction L-aspartate + H(+) = beta-alanine + CO2. The protein operates within cofactor biosynthesis; (R)-pantothenate biosynthesis; beta-alanine from L-aspartate: step 1/1. Catalyzes the pyruvoyl-dependent decarboxylation of aspartate to produce beta-alanine. This chain is Aspartate 1-decarboxylase, found in Nitrosococcus oceani (strain ATCC 19707 / BCRC 17464 / JCM 30415 / NCIMB 11848 / C-107).